The following is a 478-amino-acid chain: Divinyl ether synthase CYP74D1 (478 aa).

Cys431 serves as a coordination point for heme.

It belongs to the cytochrome P450 family. 9-divinyl ether synthase subfamily. As to expression, expressed in roots. Detected in stems, but not in flower buds, petioles, cotyledons or leaves.

It catalyses the reaction (9S)-hydroperoxy-(10E,12Z)-octadecadienoate = colneleate + H2O. It carries out the reaction (9S)-hydroperoxy-(10E,12Z,15Z)-octadecatrienoate = colnelenate + H2O. Its function is as follows. Involved in the biosynthesis of the anti-fungal toxins colneleate and colnelenate. Can use (9S)-hydroperoxy-(10E,12Z)-octadecadienoate (9-HPOD) and (9S)-hydroperoxy-(10E,12Z,15Z)-octadecatrienoate (9-HPOT) as substrates, but has a very low activity with the corresponding 13-hydroperoxides (13-HPOD and 13-POT). The protein is Divinyl ether synthase CYP74D1 of Solanum lycopersicum (Tomato).